The following is a 156-amino-acid chain: Transcription elongation factor GreA (156 aa).

Residues 1–84 adopt a coiled-coil conformation; the sequence is MAKYTISKHR…IEDVLRSTDE (84 aa).

The protein belongs to the GreA/GreB family.

Necessary for efficient RNA polymerase transcription elongation past template-encoded arresting sites. The arresting sites in DNA have the property of trapping a certain fraction of elongating RNA polymerases that pass through, resulting in locked ternary complexes. Cleavage of the nascent transcript by cleavage factors such as GreA or GreB allows the resumption of elongation from the new 3'terminus. GreA releases sequences of 2 to 3 nucleotides. The sequence is that of Transcription elongation factor GreA from Ureaplasma parvum serovar 3 (strain ATCC 27815 / 27 / NCTC 11736).